We begin with the raw amino-acid sequence, 92 residues long: Small ribosomal subunit protein uS19 (92 aa).

This sequence belongs to the universal ribosomal protein uS19 family.

Protein S19 forms a complex with S13 that binds strongly to the 16S ribosomal RNA. The polypeptide is Small ribosomal subunit protein uS19 (Methylobacterium radiotolerans (strain ATCC 27329 / DSM 1819 / JCM 2831 / NBRC 15690 / NCIMB 10815 / 0-1)).